The sequence spans 972 residues: UPF0746 protein DDB_G0280785 (972 aa).

Positions 1–19 (MISNKRKEIENINRHHEKD) are enriched in basic and acidic residues. A disordered region spans residues 1–30 (MISNKRKEIENINRHHEKDNDDDDSDGIDN). Positions 44–78 (SGSTNYRELQIIAKSLGLASNGKKQLVYNRIEGYF) constitute an SAP domain.

Belongs to the UPF0746 family.

This Dictyostelium discoideum (Social amoeba) protein is UPF0746 protein DDB_G0280785.